Here is a 628-residue protein sequence, read N- to C-terminus: CMP-5'-(3-aminopropyl)phosphonate synthase (628 aa).

A mobA-like NTP transferase region spans residues M1–F255. The segment at G278–G628 is decarboxylase. An N6-(pyridoxal phosphate)lysine modification is found at K466.

The protein in the N-terminal section; belongs to the MobA family. In the C-terminal section; belongs to the class-I pyridoxal-phosphate-dependent aminotransferase family. Mg(2+) is required as a cofactor. It depends on pyridoxal 5'-phosphate as a cofactor.

It carries out the reaction 2-amino-4-phosphonobutanoate + CTP = CMP-5'-(3-amino-3-carboxypropyl)phosphonate + diphosphate. It catalyses the reaction CMP-5'-(3-amino-3-carboxypropyl)phosphonate + H(+) = CMP-5'-(3-aminopropyl)phosphonate + CO2. The protein operates within antibiotic biosynthesis. Bifunctional cytidylyltransferase/decarboxylase involved in the biosynthesis of the phosphonate antibiotic FR-900098, a potent antimalarial agent that acts as an inhibitor of 1-deoxy-D-xylulose 5-phosphate reductoisomerase (DXR), the first enzyme in the nonmevalonate pathway for isoprenoid biosynthesis. Catalyzes the condensation of 2-amino-4-phosphonobutyrate (2APn) and CTP to form CMP-5'-2APn and then decarboxylates CMP-5'-2APn to yield CMP-5'-(3-aminopropyl)phosphonate (CMP-5'-3APn). The chain is CMP-5'-(3-aminopropyl)phosphonate synthase from Streptomyces rubellomurinus (strain ATCC 31215).